Reading from the N-terminus, the 886-residue chain is DNA gyrase subunit A (886 aa).

The Topo IIA-type catalytic domain maps to 35-501; that stretch reads LPDVRDGLKP…GFEDLEDEDL (467 aa). The O-(5'-phospho-DNA)-tyrosine intermediate role is filled by Tyr-123. Residues 528–534 carry the GyrA-box motif; that stretch reads QNRGGRG. Residues 810–860 are disordered; the sequence is VKEDADEENEDEQSTVSEDGTEQQREAVVNDETPGNAIHTEVIDSEVNDED. A compositionally biased stretch (acidic residues) spans 813 to 822; the sequence is DADEENEDEQ.

The protein belongs to the type II topoisomerase GyrA/ParC subunit family. As to quaternary structure, heterotetramer, composed of two GyrA and two GyrB chains. In the heterotetramer, GyrA contains the active site tyrosine that forms a transient covalent intermediate with DNA, while GyrB binds cofactors and catalyzes ATP hydrolysis.

It localises to the cytoplasm. It catalyses the reaction ATP-dependent breakage, passage and rejoining of double-stranded DNA.. Functionally, a type II topoisomerase that negatively supercoils closed circular double-stranded (ds) DNA in an ATP-dependent manner to modulate DNA topology and maintain chromosomes in an underwound state. Negative supercoiling favors strand separation, and DNA replication, transcription, recombination and repair, all of which involve strand separation. Also able to catalyze the interconversion of other topological isomers of dsDNA rings, including catenanes and knotted rings. Type II topoisomerases break and join 2 DNA strands simultaneously in an ATP-dependent manner. This Staphylococcus aureus (strain MRSA252) protein is DNA gyrase subunit A.